Consider the following 70-residue polypeptide: DNA gyrase inhibitor YacG (70 aa).

Zn(2+) contacts are provided by Cys-21, Cys-24, Cys-36, and Cys-40.

This sequence belongs to the DNA gyrase inhibitor YacG family. As to quaternary structure, interacts with GyrB. Zn(2+) is required as a cofactor.

In terms of biological role, inhibits all the catalytic activities of DNA gyrase by preventing its interaction with DNA. Acts by binding directly to the C-terminal domain of GyrB, which probably disrupts DNA binding by the gyrase. This Rhizobium meliloti (strain 1021) (Ensifer meliloti) protein is DNA gyrase inhibitor YacG.